The following is an 804-amino-acid chain: Phenylalanine--tRNA ligase beta subunit (804 aa).

A tRNA-binding domain is found at 40-153 (PLPDLRVVVG…SSYAVGEPFA (114 aa)). The B5 domain maps to 400–476 (PALLVLPFRP…RLHGYDNIEA (77 aa)). Mg(2+) is bound by residues Asp454, Asp460, Glu463, and Glu464. The FDX-ACB domain maps to 710-802 (SKFPAVQRDL…AESKLGAVIR (93 aa)).

It belongs to the phenylalanyl-tRNA synthetase beta subunit family. Type 1 subfamily. In terms of assembly, tetramer of two alpha and two beta subunits. It depends on Mg(2+) as a cofactor.

It is found in the cytoplasm. It catalyses the reaction tRNA(Phe) + L-phenylalanine + ATP = L-phenylalanyl-tRNA(Phe) + AMP + diphosphate + H(+). This chain is Phenylalanine--tRNA ligase beta subunit, found in Chlorobium luteolum (strain DSM 273 / BCRC 81028 / 2530) (Pelodictyon luteolum).